The primary structure comprises 276 residues: Mitochondrial distribution and morphology protein 12 (276 aa).

The SMP-LTD domain maps to 1 to 276 (MSIDIQWNLL…FVWPSYFTLY (276 aa)). Residues 68 to 104 (TLYSDDSSSLDDEESDREEENMTELPPYGATENGVHK) are disordered. Residues 75-89 (SSLDDEESDREEENM) show a composition bias toward acidic residues.

This sequence belongs to the MDM12 family. As to quaternary structure, component of the ER-mitochondria encounter structure (ERMES) or MDM complex, composed of mmm1, mdm10, mdm12 and mdm34. A mmm1 homodimer associates with one molecule of mdm12 on each side in a pairwise head-to-tail manner, and the SMP-LTD domains of mmm1 and mdm12 generate a continuous hydrophobic tunnel for phospholipid trafficking.

The protein localises to the mitochondrion outer membrane. It is found in the endoplasmic reticulum membrane. In terms of biological role, component of the ERMES/MDM complex, which serves as a molecular tether to connect the endoplasmic reticulum (ER) and mitochondria. Components of this complex are involved in the control of mitochondrial shape and protein biogenesis, and function in nonvesicular lipid trafficking between the ER and mitochondria. Mdm12 is required for the interaction of the ER-resident membrane protein mmm1 and the outer mitochondrial membrane-resident beta-barrel protein mdm10. The mdm12-mmm1 subcomplex functions in the major beta-barrel assembly pathway that is responsible for biogenesis of all mitochondrial outer membrane beta-barrel proteins, and acts in a late step after the SAM complex. The mdm10-mdm12-mmm1 subcomplex further acts in the TOM40-specific pathway after the action of the mdm12-mmm1 complex. Essential for establishing and maintaining the structure of mitochondria and maintenance of mtDNA nucleoids. The chain is Mitochondrial distribution and morphology protein 12 from Schizosaccharomyces japonicus (strain yFS275 / FY16936) (Fission yeast).